Here is a 131-residue protein sequence, read N- to C-terminus: Small ribosomal subunit protein uS11 (131 aa).

The protein belongs to the universal ribosomal protein uS11 family. As to quaternary structure, part of the 30S ribosomal subunit. Interacts with proteins S7 and S18. Binds to IF-3.

Functionally, located on the platform of the 30S subunit, it bridges several disparate RNA helices of the 16S rRNA. Forms part of the Shine-Dalgarno cleft in the 70S ribosome. This chain is Small ribosomal subunit protein uS11, found in Helicobacter pylori (strain ATCC 700392 / 26695) (Campylobacter pylori).